The following is a 133-amino-acid chain: Hexon-interlacing protein (133 aa).

Residues 97 to 127 (REEDALSVVLTRMEELSQQLQDLFAKVALLN) are a coiled coil.

It belongs to the adenoviridae hexon-interlacing protein family. Homotrimer. Interacts with hexon protein; this interaction tethers the hexons together. Self-interacts with adjacent proteins. Interacts with kinesin light chain KLC1; this interaction leads to capsid disruption at the nuclear pore complex during virus entry into host cell.

Its subcellular location is the virion. The protein resides in the host nucleus. Structural component of the virion that acts as a cement protein on the capsid exterior and forms triskelion structures consisting of three molecules that stabilize three hexon trimers at the center of each icosahedral facet and fixes the peripentonal hexons. Dispensable for assembly. During virus entry, recruits the anterograde motor kinesin-1 to the capsid docked at the nuclear pore complex thereby subjecting the docked capsid to a pulling force. The resulting tension leads to capsid disruption, dispersion of capsid fragments toward cell periphery and eventually viral DNA entry into the host nucleus. In Homo sapiens (Human), this protein is Hexon-interlacing protein.